The primary structure comprises 93 residues: Alpha-defensin 7 (93 aa).

An N-terminal signal peptide occupies residues 1-19 (MKTLILLSALVLLAFQVQA). Positions 20–58 (DPIQNTDEETKTEEQPGEDDQAVSVSFGDPEGSSLQEES) are excised as a propeptide. Residues 22-56 (IQNTDEETKTEEQPGEDDQAVSVSFGDPEGSSLQE) form a disordered region. Cystine bridges form between cysteine 64/cysteine 92, cysteine 66/cysteine 81, and cysteine 71/cysteine 91.

This sequence belongs to the alpha-defensin family. Paneth cells of the small bowel.

Its subcellular location is the secreted. Functionally, probably contributes to the antimicrobial barrier function of the small bowel mucosa. This Mus musculus (Mouse) protein is Alpha-defensin 7 (Defa7).